The chain runs to 224 residues: UPF0111 protein CT_691 (224 aa).

Belongs to the UPF0111 family.

This chain is UPF0111 protein CT_691, found in Chlamydia trachomatis serovar D (strain ATCC VR-885 / DSM 19411 / UW-3/Cx).